Reading from the N-terminus, the 567-residue chain is Glutamate--tRNA ligase (567 aa).

The short motif at 106-116 (PNPDGPLHLGN) is the 'HIGH' region element.

This sequence belongs to the class-I aminoacyl-tRNA synthetase family. Glutamate--tRNA ligase type 2 subfamily.

Its subcellular location is the cytoplasm. The catalysed reaction is tRNA(Glu) + L-glutamate + ATP = L-glutamyl-tRNA(Glu) + AMP + diphosphate. In terms of biological role, catalyzes the attachment of glutamate to tRNA(Glu) in a two-step reaction: glutamate is first activated by ATP to form Glu-AMP and then transferred to the acceptor end of tRNA(Glu). The chain is Glutamate--tRNA ligase from Sulfolobus acidocaldarius (strain ATCC 33909 / DSM 639 / JCM 8929 / NBRC 15157 / NCIMB 11770).